The chain runs to 442 residues: GTPase Obg (442 aa).

Residues 1–158 enclose the Obg domain; that stretch reads MFYDQARIFV…HWLELELKLL (158 aa). One can recognise an OBG-type G domain in the interval 159-329; it reads ADVGLVGFPN…LIYHVHKGLE (171 aa). GTP contacts are provided by residues 165-172, 190-194, 212-215, 282-285, and 310-312; these read GFPNVGKS, FTTLE, DIPG, NKMD, and SAA. The Mg(2+) site is built by serine 172 and threonine 192. The OCT domain maps to 349 to 427; that stretch reads FTGKTEERFK…IGDLDFDFIE (79 aa).

It belongs to the TRAFAC class OBG-HflX-like GTPase superfamily. OBG GTPase family. In terms of assembly, monomer. The cofactor is Mg(2+).

The protein resides in the cytoplasm. Functionally, an essential GTPase which binds GTP, GDP and possibly (p)ppGpp with moderate affinity, with high nucleotide exchange rates and a fairly low GTP hydrolysis rate. Plays a role in control of the cell cycle, stress response, ribosome biogenesis and in those bacteria that undergo differentiation, in morphogenesis control. In Heliobacterium modesticaldum (strain ATCC 51547 / Ice1), this protein is GTPase Obg.